A 375-amino-acid chain; its full sequence is INO80 complex subunit B (375 aa).

The interval 1–84 (MSACVPTVSS…GPTLQTPAKP (84 aa)) is disordered. The span at 50-68 (HGVHKKKHKKHKKKHKKKH) shows a compositional bias: basic residues. Residues S114, S116, S144, S147, and S149 each carry the phosphoserine modification. Disordered stretches follow at residues 143 to 165 (DSNLSPSPLRDLPGDLEGQEEEE), 201 to 220 (LQKARSQPSPTLPLPVGGGC), 262 to 287 (TAAPSGRGGRGAARGERRGGRAAAPA), and 312 to 331 (PTAVAQRPAPSGPAPRCSVP). The stretch at 230 to 262 (LLKREERARKRRLQAARRAEEHKNQTIERLTKT) forms a coiled coil. The HIT-type zinc-finger motif lies at 324 to 355 (PAPRCSVPGCPHPRRYACSRTGQALCSLQCYR).

Component of the chromatin remodeling INO80 complex; specifically part of a complex module associated with the helicase ATP-binding and the helicase C-terminal domain of INO80. Interacts with RP9. In terms of tissue distribution, expressed strongly in the testis and moderately in the kidney, skeletal muscle, liver and lung.

It is found in the nucleus. The protein localises to the nucleolus. In terms of biological role, proposed core component of the chromatin remodeling INO80 complex which is involved in transcriptional regulation, DNA replication and probably DNA repair. The sequence is that of INO80 complex subunit B (Ino80b) from Mus musculus (Mouse).